The following is a 280-amino-acid chain: SPX domain-containing protein 2 (280 aa).

Positions 1–162 (MKFGKSLSSQ…GSMIRLPFVQ (162 aa)) constitute an SPX domain. Disordered stretches follow at residues 191–244 (PTNE…KSTV) and 257–280 (GSST…EPGR).

As to quaternary structure, interacts (via SPX domain) with PHR2 (via C-terminus). Interacts with RLI1 in the nucleus to prevents its positive regulation of leaf inclination during phosphate (Pi) starvation. In terms of tissue distribution, predominantly expressed in roots, leaves and seeds. Localized in leaves lamina joints.

It is found in the nucleus. Its function is as follows. Inhibits PHR2 DNA-binding activity via a phosphate (Pi)-dependent protein interaction. Together with SPX1, plays a negative role in the regulation of leaf inclination by preventing RLI1 transcription factor activity in Pi depleted conditions. The protein is SPX domain-containing protein 2 of Oryza sativa subsp. japonica (Rice).